Here is a 394-residue protein sequence, read N- to C-terminus: Small ribosomal subunit protein mS79 (rPPR3b) (394 aa).

A mitochondrion-targeting transit peptide spans 1–24 (MSSLSRFLLRGNFSFSTHTNRRFF). PPR repeat units lie at residues 105–139 (KEGF…NCKR), 140–170 (TALS…LPGK), 176–210 (DVAS…GLKP), 211–245 (DHIT…NVKR), 246–280 (DIRS…ELKP), 281–315 (DVFT…GCRP), 316–350 (LKFV…RLLV), and 351–385 (DEAV…DYLQ).

Belongs to the PPR family. P subfamily. In terms of assembly, component of the mitochondrial ribosome small subunit.

Its subcellular location is the mitochondrion. In Arabidopsis thaliana (Mouse-ear cress), this protein is Small ribosomal subunit protein mS79 (rPPR3b).